Reading from the N-terminus, the 361-residue chain is MSAIALYLEINKLRLKIDEPMQLAIWPQLFPLLCDEHQSVQLNTDVLINFMMHVARKSQNTILNNNAAIASQYAAGNADVVAAPASAQPTPRPVINLFARANAAAPAQPSEELINMRRYRNAARKLIHHYSLNSTSSTEYKISDVVMTMIFLLRSEKYHSLFKLLETTFDDYTCRPQMTQVQTDTLLDAVRSLLEMPSTTIDLTTVDIMRSSFARCFNSPIMRYAKIVLLQNVALQRDKRTTLEELLIERGEKIQMLQPQQYINSGTEIPFCDDAEFLNRLLKHIDPYPLSRMYYNAANTMFYTTMENYAVSNCKFNIEDYNNIFKVMENIRKHSNKNSNDQDELNIYLGVQSSNAKRKKY.

The LXCXE motif stretch occupies residues Leu-32 to Glu-36. Positions Lys-357–Lys-360 match the Nuclear localization signal motif.

Belongs to the baculoviridae C42 protein family. Forms a complex with proteins E27 and p78/83. The interaction with p78/83 mediates nuclear translocation of P78/83. Interacts with protein Ac102. Interacts with IE0.

It localises to the host nucleus. The protein resides in the virion. Plays a role in host nuclear actin polymerization by recruiting p78/73 protein that is capable of activating an actin-related protein 2/3 complex to initiate nuclear actin polymerization. The sequence is that of Protein C42 from Lepidoptera (butterflies and moths).